The primary structure comprises 303 residues: Elongation factor Ts (303 aa).

Residues 80–83 are involved in Mg(2+) ion dislocation from EF-Tu; that stretch reads TDFV.

The protein belongs to the EF-Ts family.

It localises to the cytoplasm. Functionally, associates with the EF-Tu.GDP complex and induces the exchange of GDP to GTP. It remains bound to the aminoacyl-tRNA.EF-Tu.GTP complex up to the GTP hydrolysis stage on the ribosome. This Clostridium perfringens (strain ATCC 13124 / DSM 756 / JCM 1290 / NCIMB 6125 / NCTC 8237 / Type A) protein is Elongation factor Ts.